Here is a 1076-residue protein sequence, read N- to C-terminus: Hormone-sensitive lipase (1076 aa).

Polar residues-rich tracts occupy residues 1-12 (MEPGSKSVSRSD) and 38-64 (ESKT…QETP). Disordered regions lie at residues 1 to 198 (MEPG…KSKQ) and 229 to 250 (VTDS…PATM). Residues 65–77 (AQHDAESQKEPRA) show a composition bias toward basic and acidic residues. The span at 94 to 116 (APQQSPYIQRVLLTQQEAASQQG) shows a compositional bias: polar residues. A compositionally biased stretch (pro residues) spans 140 to 149 (GPGPGEPPPA). Over residues 150–161 (QQEAESTPAAQA) the composition is skewed to low complexity. Residues 172 to 198 (PTESTSQETPEQSDKQTTPVQGAKSKQ) show a composition bias toward polar residues. The segment covering 237–246 (DVGSSSDTDS) has biased composition (low complexity). Positions 651–653 (HGG) match the Involved in the stabilization of the negatively charged intermediate by the formation of the oxyanion hole motif. Residue S725 is part of the active site. The disordered stretch occupies residues 838 to 930 (KSQKMSEPIA…EAEAKNELSP (93 aa)). S853 bears the Phosphoserine mark. Phosphoserine; by AMPK is present on S855. The segment covering 882–908 (RGNSETSSDTPEMSLSAETLSPSTPSD) has biased composition (polar residues). Phosphoserine occurs at positions 897, 929, 950, and 951. Active-site residues include D994 and H1024. Residues 1055 to 1076 (AGAGPSGETGAAGVDGGCGGRH) form a disordered region. Residues 1067 to 1076 (GVDGGCGGRH) are compositionally biased toward gly residues.

It belongs to the 'GDXG' lipolytic enzyme family. As to quaternary structure, monomer and homodimer. Interacts with CAVIN1 in the adipocyte cytoplasm. Interacts with PLIN5. In terms of processing, phosphorylation by AMPK reduces its translocation towards the lipid droplets. As to expression, testis.

Its subcellular location is the cell membrane. It localises to the membrane. The protein localises to the caveola. It is found in the cytoplasm. The protein resides in the cytosol. Its subcellular location is the lipid droplet. The catalysed reaction is a diacylglycerol + H2O = a monoacylglycerol + a fatty acid + H(+). It catalyses the reaction a triacylglycerol + H2O = a diacylglycerol + a fatty acid + H(+). The enzyme catalyses a monoacylglycerol + H2O = glycerol + a fatty acid + H(+). It carries out the reaction Hydrolyzes glycerol monoesters of long-chain fatty acids.. The catalysed reaction is 1,2-di-(9Z-octadecenoyl)-glycerol + (9Z)-octadecenoate + H(+) = 1,2,3-tri-(9Z-octadecenoyl)-glycerol + H2O. It catalyses the reaction 2,3-di-(9Z)-octadecenoyl-sn-glycerol + H2O = 2-(9Z-octadecenoyl)-glycerol + (9Z)-octadecenoate + H(+). The enzyme catalyses cholesteryl (9Z-octadecenoate) + H2O = cholesterol + (9Z)-octadecenoate + H(+). It carries out the reaction 1,2,3-tri-(9Z-octadecenoyl)-glycerol + H2O = di-(9Z)-octadecenoylglycerol + (9Z)-octadecenoate + H(+). The catalysed reaction is all-trans-retinyl hexadecanoate + H2O = all-trans-retinol + hexadecanoate + H(+). It catalyses the reaction 1,2-di-(9Z-octadecenoyl)-glycerol + H2O = (9Z-octadecenoyl)-glycerol + (9Z)-octadecenoate + H(+). The enzyme catalyses 2-(5Z,8Z,11Z,14Z-eicosatetraenoyl)-glycerol + H2O = glycerol + (5Z,8Z,11Z,14Z)-eicosatetraenoate + H(+). It carries out the reaction 1-(9Z-octadecenoyl)-glycerol + H2O = glycerol + (9Z)-octadecenoate + H(+). The catalysed reaction is 2-(9Z-octadecenoyl)-glycerol + H2O = glycerol + (9Z)-octadecenoate + H(+). It catalyses the reaction 1-O-hexadecyl-2-acetyl-sn-glycerol + H2O = 1-O-hexadecyl-sn-glycerol + acetate + H(+). The enzyme catalyses 1,2-di-(9Z-octadecenoyl)-sn-glycerol + H2O = (9Z-octadecenoyl)-glycerol + (9Z)-octadecenoate + H(+). It carries out the reaction 1,3-di-(9Z-octadecenoyl)-glycerol + H2O = 1-(9Z-octadecenoyl)-glycerol + (9Z)-octadecenoate + H(+). The catalysed reaction is 1,2-di-(9Z-octadecenoyl)-glycerol + H2O = 2-(9Z-octadecenoyl)-glycerol + (9Z)-octadecenoate + H(+). It functions in the pathway glycerolipid metabolism; triacylglycerol degradation. With respect to regulation, retinyl ester hydrolase is inhibited by bis-p-nitrophenyl phosphate. Functionally, lipase with broad substrate specificity, catalyzing the hydrolysis of triacylglycerols (TAGs), diacylglycerols (DAGs), monoacylglycerols (MAGs), cholesteryl esters and retinyl esters. Shows a preferential hydrolysis of DAGs over TAGs and MAGs and preferentially hydrolyzes the fatty acid (FA) esters at the sn-3 position of the glycerol backbone in DAGs. Preferentially hydrolyzes FA esters at the sn-1 and sn-2 positions of the glycerol backbone in TAGs. Catalyzes the hydrolysis of 2-arachidonoylglycerol, an endocannabinoid and of 2-acetyl monoalkylglycerol ether, the penultimate precursor of the pathway for de novo synthesis of platelet-activating factor. In adipose tissue and heart, it primarily hydrolyzes stored triglycerides to free fatty acids, while in steroidogenic tissues, it principally converts cholesteryl esters to free cholesterol for steroid hormone production. The protein is Hormone-sensitive lipase (LIPE) of Homo sapiens (Human).